The following is a 117-amino-acid chain: Ribonuclease P protein component (117 aa).

Belongs to the RnpA family. As to quaternary structure, consists of a catalytic RNA component (M1 or rnpB) and a protein subunit.

The catalysed reaction is Endonucleolytic cleavage of RNA, removing 5'-extranucleotides from tRNA precursor.. Functionally, RNaseP catalyzes the removal of the 5'-leader sequence from pre-tRNA to produce the mature 5'-terminus. It can also cleave other RNA substrates such as 4.5S RNA. The protein component plays an auxiliary but essential role in vivo by binding to the 5'-leader sequence and broadening the substrate specificity of the ribozyme. The chain is Ribonuclease P protein component from Thermotoga maritima (strain ATCC 43589 / DSM 3109 / JCM 10099 / NBRC 100826 / MSB8).